The sequence spans 91 residues: Putative membrane protein insertion efficiency factor (91 aa).

Positions 72–91 (SGGNDPVPEKLTHINHQHEK) are disordered. Basic and acidic residues predominate over residues 78–91 (VPEKLTHINHQHEK).

The protein belongs to the UPF0161 family.

The protein resides in the cell inner membrane. Could be involved in insertion of integral membrane proteins into the membrane. This is Putative membrane protein insertion efficiency factor from Pseudoalteromonas translucida (strain TAC 125).